A 169-amino-acid polypeptide reads, in one-letter code: Ubiquitin-fold modifier-conjugating enzyme 1 (169 aa).

Cysteine 116 functions as the Glycyl thioester intermediate in the catalytic mechanism.

This sequence belongs to the ubiquitin-conjugating enzyme family. UFC1 subfamily.

Its function is as follows. E2-like enzyme which forms an intermediate with UFM1 via a thioester linkage. The polypeptide is Ubiquitin-fold modifier-conjugating enzyme 1 (Branchiostoma floridae (Florida lancelet)).